A 341-amino-acid chain; its full sequence is KH domain-containing RNA-binding protein QKI (341 aa).

A qua1 domain; involved in homodimerization region spans residues 11-82 (PKPTPDYLMQ…PDAVGPIVQL (72 aa)). Residues 87–153 (YVPVKEYPDF…WEHLNEDLHV (67 aa)) form the KH domain. Residues 182-213 (AAEGEDSLKKMQLMELAILNGTYRDANIKSPA) are qua2 domain; involved in RNA binding. Position 188 is a phosphoserine (serine 188). The residue at position 227 (arginine 227) is an Omega-N-methylarginine. Asymmetric dimethylarginine; by CARM1; alternate is present on arginine 242. Position 242 is an omega-N-methylarginine; alternate (arginine 242). At arginine 256 the chain carries Omega-N-methylarginine. Positions 276–279 (PPGP) match the SH3-binding motif. The short motif at 324-330 (RVHPYQR) is the Nuclear localization signal element.

Belongs to the quaking family. Homodimer; does not require RNA to homodimerize. Able to heterodimerize with BICC1. In terms of processing, methylated by PRMT1. Tyrosine phosphorylated at its C-terminus, probably by FYN. Phosphorylation leads to decreased mRNA-binding affinity, affecting transport and/or stabilization of MBP mRNA. Post-translationally, ubiquitinated by RNF6 in macrophages, leading to its degradation.

It is found in the nucleus. The protein localises to the cytoplasm. In terms of biological role, RNA reader protein, which recognizes and binds specific RNAs, thereby regulating RNA metabolic processes, such as pre-mRNA splicing, circular RNA (circRNA) formation, mRNA export, mRNA stability and/or translation. Involved in various cellular processes, such as mRNA storage into stress granules, apoptosis, lipid deposition, interferon response, glial cell fate and development. Binds to the 5'-NACUAAY-N(1,20)-UAAY-3' RNA core sequence. Acts as a mRNA modification reader that specifically recognizes and binds mRNA transcripts modified by internal N(7)-methylguanine (m7G). Promotes the formation of circular RNAs (circRNAs) during the epithelial to mesenchymal transition and in cardiomyocytes: acts by binding to sites flanking circRNA-forming exons. CircRNAs are produced by back-splicing circularization of pre-mRNAs. Plays a central role in myelinization via 3 distinct mechanisms. First, acts by protecting and promoting stability of target mRNAs such as MBP, SIRT2 and CDKN1B, which promotes oligodendrocyte differentiation. Second, participates in mRNA transport by regulating the nuclear export of MBP mRNA. Finally, indirectly regulates mRNA splicing of MAG pre-mRNA during oligodendrocyte differentiation by acting as a negative regulator of MAG exon 12 alternative splicing: acts by binding to HNRNPA1 mRNA splicing factor, preventing its translation. Involved in microglia differentiation and remyelination by regulating microexon alternative splicing of the Rho GTPase pathway. Involved in macrophage differentiation: promotes monocyte differentiation by regulating pre-mRNA splicing in naive peripheral blood monocytes. Acts as an important regulator of muscle development: required for the contractile function of cardiomyocytes by regulating alternative splicing of cardiomyocyte transcripts. Acts as a negative regulator of thermogenesis by decreasing stability, nuclear export and translation of mRNAs encoding PPARGC1A and UCP1. Also required for visceral endoderm function and blood vessel development. May also play a role in smooth muscle development. In addition to its RNA-binding activity, also acts as a nuclear transcription coactivator for SREBF2/SREBP2. This Bos taurus (Bovine) protein is KH domain-containing RNA-binding protein QKI.